The sequence spans 42 residues: Photosystem II reaction center protein J (42 aa).

A helical transmembrane segment spans residues 10 to 30 (IPLWFIGVIAGIAALSIVGLF).

Belongs to the PsbJ family. In terms of assembly, PSII is composed of 1 copy each of membrane proteins PsbA, PsbB, PsbC, PsbD, PsbE, PsbF, PsbH, PsbI, PsbJ, PsbK, PsbL, PsbM, PsbT, PsbX, PsbY, PsbZ, Psb30/Ycf12, at least 3 peripheral proteins of the oxygen-evolving complex and a large number of cofactors. It forms dimeric complexes.

It is found in the plastid. The protein localises to the chloroplast thylakoid membrane. Functionally, one of the components of the core complex of photosystem II (PSII). PSII is a light-driven water:plastoquinone oxidoreductase that uses light energy to abstract electrons from H(2)O, generating O(2) and a proton gradient subsequently used for ATP formation. It consists of a core antenna complex that captures photons, and an electron transfer chain that converts photonic excitation into a charge separation. This is Photosystem II reaction center protein J from Zygnema circumcarinatum (Green alga).